The sequence spans 1037 residues: Sodium/potassium exporting P-type ATPase cta3 (1037 aa).

The Cytoplasmic segment spans residues 1–61 (MVTINISNPV…GVSAWKVLLR (61 aa)). Residues 62 to 82 (QVLNAMCVVLILAAALSFGTT) traverse the membrane as a helical segment. A topological domain (extracellular) is located at residue Asp83. Residues 84–104 (WIEGGVISAIIVLNITVGFIQ) traverse the membrane as a helical segment. Residues 105–281 (EYKAEKTMDS…LNVGTPLQRK (177 aa)) are Cytoplasmic-facing. A helical transmembrane segment spans residues 282-302 (LTVLAYILFCIAIILAIIVMA). Over 303 to 313 (AHSFHVTNEVS) the chain is Extracellular. The chain crosses the membrane as a helical span at residues 314–334 (IYAISLGISIIPESLIAVLSI). The Cytoplasmic segment spans residues 335-760 (TMAMGQKNMS…GRRMFDNIMR (426 aa)). The 4-aspartylphosphate intermediate role is filled by Asp368. Mg(2+) is bound by residues Asp368 and Thr370. ATP contacts are provided by Thr370, Glu468, Lys520, Arg559, Thr620, Gly621, Asp622, Arg678, and Lys684. A Mg(2+)-binding site is contributed by Asp703. Asn706 provides a ligand contact to ATP. Residues 761 to 781 (FVLHLLVSNVGEVILLVVGLA) traverse the membrane as a helical segment. The Extracellular portion of the chain corresponds to 782–787 (FRDEVH). The chain crosses the membrane as a helical span at residues 788–808 (LSVFPMSPVEILWCNMITSSF). At 809-844 (PSMGLGMELAQPDVMERLPHDNKVGIFQKSLIVDMM) the chain is on the cytoplasmic side. A helical membrane pass occupies residues 845-865 (VYGFFLGVVSLMTWVVIMYGF). The Extracellular portion of the chain corresponds to 866–889 (GTGNLSYDCNAHYHAGCNDVFKAR). N-linked (GlcNAc...) asparagine glycosylation is present at Asn869. Residues 890 to 910 (SAVFAVVTFCILIMAVEVKNF) traverse the membrane as a helical segment. Topologically, residues 911-939 (DNSLFNLHGIPWGEWNFRYFLHTLVENKF) are cytoplasmic. Residues 940–960 (LAWAIALAAVSVFPTIYIPVI) form a helical membrane-spanning segment. The Extracellular portion of the chain corresponds to 961–969 (NRDVFKHTY). Residues 970 to 990 (IGWEWGVVAVAVMFYFFYVEI) traverse the membrane as a helical segment. Residues 991-1037 (WKSIRRSLTNPQKKGKFRRTLSNTITTESKLSEKDLEHRLFLQSRRA) are Cytoplasmic-facing. Ser1012 is subject to Phosphoserine.

It belongs to the cation transport ATPase (P-type) (TC 3.A.3) family. Type IID subfamily. The cofactor is Mg(2+). In terms of processing, the active site is phosphorylated in presence of sodium or potassium and in conditions of higher pH. Not phosphorylated in presence of calcium ions.

It is found in the cell membrane. The catalysed reaction is Na(+)(in) + ATP + H2O = Na(+)(out) + ADP + phosphate + H(+). It carries out the reaction K(+)(in) + ATP + H2O = K(+)(out) + ADP + phosphate + H(+). Catalyzes the hydrolysis of ATP coupled with the export of sodium and potassium from the cell. May export sodium less efficiently. May transport other cations such as lithium. Sodium/potassium efflux ATPases are involved in salt tolerance and maintaining the membrane potential across the plasma membrane in high salinity (Na+) or alkaline (K+) environments. This chain is Sodium/potassium exporting P-type ATPase cta3, found in Schizosaccharomyces pombe (strain 972 / ATCC 24843) (Fission yeast).